The sequence spans 142 residues: Cytochrome c-type biogenesis protein CcmE (142 aa).

Residues methionine 1–lysine 2 are Cytoplasmic-facing. A helical; Signal-anchor for type II membrane protein transmembrane segment spans residues glycine 3–glycine 23. Topologically, residues leucine 24–glutamine 142 are periplasmic. Heme is bound by residues histidine 118 and tyrosine 122.

This sequence belongs to the CcmE/CycJ family.

It localises to the cell inner membrane. Its function is as follows. Heme chaperone required for the biogenesis of c-type cytochromes. Transiently binds heme delivered by CcmC and transfers the heme to apo-cytochromes in a process facilitated by CcmF and CcmH. This is Cytochrome c-type biogenesis protein CcmE from Thermus thermophilus (strain ATCC BAA-163 / DSM 7039 / HB27).